The following is a 292-amino-acid chain: Elongation factor Ts (292 aa).

Positions 82-85 (TDFV) are involved in Mg(2+) ion dislocation from EF-Tu.

This sequence belongs to the EF-Ts family.

It localises to the cytoplasm. In terms of biological role, associates with the EF-Tu.GDP complex and induces the exchange of GDP to GTP. It remains bound to the aminoacyl-tRNA.EF-Tu.GTP complex up to the GTP hydrolysis stage on the ribosome. In Legionella pneumophila (strain Paris), this protein is Elongation factor Ts.